The chain runs to 156 residues: Cyclic pyranopterin monophosphate synthase (156 aa).

Substrate-binding positions include 75–77 and 111–112; these read LCH and ME. D126 is an active-site residue.

Belongs to the MoaC family. As to quaternary structure, homohexamer; trimer of dimers.

It catalyses the reaction (8S)-3',8-cyclo-7,8-dihydroguanosine 5'-triphosphate = cyclic pyranopterin phosphate + diphosphate. It functions in the pathway cofactor biosynthesis; molybdopterin biosynthesis. Its function is as follows. Catalyzes the conversion of (8S)-3',8-cyclo-7,8-dihydroguanosine 5'-triphosphate to cyclic pyranopterin monophosphate (cPMP). This chain is Cyclic pyranopterin monophosphate synthase, found in Caulobacter sp. (strain K31).